The sequence spans 205 residues: ATP phosphoribosyltransferase (205 aa).

The protein belongs to the ATP phosphoribosyltransferase family. Short subfamily.

Its subcellular location is the cytoplasm. The enzyme catalyses 1-(5-phospho-beta-D-ribosyl)-ATP + diphosphate = 5-phospho-alpha-D-ribose 1-diphosphate + ATP. Its pathway is amino-acid biosynthesis; L-histidine biosynthesis; L-histidine from 5-phospho-alpha-D-ribose 1-diphosphate: step 1/9. Functionally, catalyzes the condensation of ATP and 5-phosphoribose 1-diphosphate to form N'-(5'-phosphoribosyl)-ATP (PR-ATP). Has a crucial role in the pathway because the rate of histidine biosynthesis seems to be controlled primarily by regulation of HisG enzymatic activity. This Thermococcus gammatolerans (strain DSM 15229 / JCM 11827 / EJ3) protein is ATP phosphoribosyltransferase.